A 340-amino-acid chain; its full sequence is E3 ubiquitin ligase BIG BROTHER-related (340 aa).

Disordered stretches follow at residues 1-56 and 133-182; these read MPME…GVGE and YDED…GNSD. The span at 34 to 46 shows a compositional bias: polar residues; the sequence is NRQTGVVSDTGSG. Acidic residues-rich tracts occupy residues 133-164 and 173-182; these read YDED…EDGL and DDQEDDGNSD. The RING-type; atypical zinc-finger motif lies at 288 to 329; sequence CVICRLDYEDDEDLILLPCKHSYHSECINNWLKINKVCPVCS.

Post-translationally, auto-ubiquitinated.

The catalysed reaction is S-ubiquitinyl-[E2 ubiquitin-conjugating enzyme]-L-cysteine + [acceptor protein]-L-lysine = [E2 ubiquitin-conjugating enzyme]-L-cysteine + N(6)-ubiquitinyl-[acceptor protein]-L-lysine.. It participates in protein modification; protein ubiquitination. In terms of biological role, E3 ubiquitin-ligase probably involved in organ size regulation. In Arabidopsis thaliana (Mouse-ear cress), this protein is E3 ubiquitin ligase BIG BROTHER-related (BBR).